The following is a 292-amino-acid chain: Recombination-promoting nuclease RpnA (292 aa).

Belongs to the Rpn/YhgA-like nuclease family. Mg(2+) is required as a cofactor.

With respect to regulation, inhibited by EDTA, Zn(2+) and by Mg(2+) plus Mn(2+); stimulated by Ca(2+) in the presence of Mg(2+). Its function is as follows. A low activity DNA endonuclease yielding 3'-hydroxyl ends, equally active on ss or dsDNA, not active on dsRNA. Shows no sequence specificity. Upon expression enhances RecA-independent DNA recombination 49-fold, concomitantly reducing viability by 88% and probably inducing DNA damage as measured by induction of the SOS repair response in RecA cells. RecA-independent DNA recombination leads to replacement of recipient genes with large segments of donor DNA rather than DNA addition to the donor strain; increased expression of RpnA leads to smaller replacement segments, suggesting this protein may play a role in generating crossover events. This is Recombination-promoting nuclease RpnA from Escherichia coli (strain K12).